Here is a 137-residue protein sequence, read N- to C-terminus: SPbeta prophage-derived disulfide bond formation protein A (137 aa).

Residues 1-25 (MKKWIVLFLVLIAAAISIFVYVSTG) form the signal peptide. A Thioredoxin domain is found at 26–136 (SEKPFYNDIN…IEKFFDKNGD (111 aa)). A disulfide bond links cysteine 58 and cysteine 61.

The protein belongs to the thioredoxin family.

The protein resides in the secreted. Its function is as follows. Unknown; dispensable for production of the lantibiotic sublancin 168 and for competence for DNA uptake. This is SPbeta prophage-derived disulfide bond formation protein A (bdbA) from Bacillus subtilis (strain 168).